Here is a 318-residue protein sequence, read N- to C-terminus: Putative olfactory receptor 2W6 (318 aa).

The Extracellular portion of the chain corresponds to Met-1–Leu-31. The chain crosses the membrane as a helical span at residues Ile-32–Val-52. The Cytoplasmic segment spans residues Leu-53–Thr-63. The helical transmembrane segment at Pro-64 to Ile-84 threads the bilayer. Residues Pro-85–Cys-103 are Extracellular-facing. A disulfide bond links Cys-103 and Cys-185. Residues Ala-104 to Met-124 traverse the membrane as a helical segment. The Cytoplasmic portion of the chain corresponds to Ala-125 to Arg-145. Residues Leu-146–Ala-166 form a helical membrane-spanning segment. Over Pro-167 to Glu-202 the chain is Extracellular. Residues Ala-203 to Ser-223 form a helical membrane-spanning segment. The Cytoplasmic segment spans residues Tyr-224–Asn-245. The chain crosses the membrane as a helical span at residues Thr-246–Leu-266. Over Gln-267–Gly-277 the chain is Extracellular. A helical membrane pass occupies residues Lys-278 to Leu-298. The Cytoplasmic segment spans residues Arg-299–Ile-318.

Belongs to the G-protein coupled receptor 1 family.

The protein localises to the cell membrane. In terms of biological role, odorant receptor. This Homo sapiens (Human) protein is Putative olfactory receptor 2W6 (OR2W6P).